Reading from the N-terminus, the 407-residue chain is Imidazolonepropionase (407 aa).

2 residues coordinate Fe(3+): histidine 74 and histidine 76. Residues histidine 74 and histidine 76 each contribute to the Zn(2+) site. Positions 83, 146, and 179 each coordinate 4-imidazolone-5-propanoate. Tyrosine 146 contributes to the N-formimidoyl-L-glutamate binding site. Histidine 244 contributes to the Fe(3+) binding site. Histidine 244 is a binding site for Zn(2+). 4-imidazolone-5-propanoate is bound at residue glutamine 247. Residue aspartate 319 participates in Fe(3+) binding. Aspartate 319 contributes to the Zn(2+) binding site. Residues asparagine 321 and glycine 323 each contribute to the N-formimidoyl-L-glutamate site. Residue threonine 324 participates in 4-imidazolone-5-propanoate binding.

It belongs to the metallo-dependent hydrolases superfamily. HutI family. Zn(2+) is required as a cofactor. The cofactor is Fe(3+).

The protein resides in the cytoplasm. The catalysed reaction is 4-imidazolone-5-propanoate + H2O = N-formimidoyl-L-glutamate. It participates in amino-acid degradation; L-histidine degradation into L-glutamate; N-formimidoyl-L-glutamate from L-histidine: step 3/3. Functionally, catalyzes the hydrolytic cleavage of the carbon-nitrogen bond in imidazolone-5-propanoate to yield N-formimidoyl-L-glutamate. It is the third step in the universal histidine degradation pathway. This Salmonella enteritidis PT4 (strain P125109) protein is Imidazolonepropionase.